A 312-amino-acid chain; its full sequence is Putative S-adenosyl-L-methionine-dependent methyltransferase Mkms_0097 (312 aa).

Residues Asp134 and 163–164 (DL) each bind S-adenosyl-L-methionine.

This sequence belongs to the UPF0677 family.

Its function is as follows. Exhibits S-adenosyl-L-methionine-dependent methyltransferase activity. In Mycobacterium sp. (strain KMS), this protein is Putative S-adenosyl-L-methionine-dependent methyltransferase Mkms_0097.